Here is a 476-residue protein sequence, read N- to C-terminus: Proline--tRNA ligase 2 (476 aa).

This sequence belongs to the class-II aminoacyl-tRNA synthetase family. ProS type 3 subfamily. Homodimer.

It localises to the cytoplasm. It catalyses the reaction tRNA(Pro) + L-proline + ATP = L-prolyl-tRNA(Pro) + AMP + diphosphate. Catalyzes the attachment of proline to tRNA(Pro) in a two-step reaction: proline is first activated by ATP to form Pro-AMP and then transferred to the acceptor end of tRNA(Pro). The chain is Proline--tRNA ligase 2 from Bacillus thuringiensis subsp. konkukian (strain 97-27).